We begin with the raw amino-acid sequence, 317 residues long: Acetyl-coenzyme A carboxylase carboxyl transferase subunit alpha (317 aa).

The CoA carboxyltransferase C-terminal domain maps to 32 to 293 (NLSEEIARLE…KRLLTSELQA (262 aa)).

This sequence belongs to the AccA family. As to quaternary structure, acetyl-CoA carboxylase is a heterohexamer composed of biotin carboxyl carrier protein (AccB), biotin carboxylase (AccC) and two subunits each of ACCase subunit alpha (AccA) and ACCase subunit beta (AccD).

Its subcellular location is the cytoplasm. It carries out the reaction N(6)-carboxybiotinyl-L-lysyl-[protein] + acetyl-CoA = N(6)-biotinyl-L-lysyl-[protein] + malonyl-CoA. Its pathway is lipid metabolism; malonyl-CoA biosynthesis; malonyl-CoA from acetyl-CoA: step 1/1. In terms of biological role, component of the acetyl coenzyme A carboxylase (ACC) complex. First, biotin carboxylase catalyzes the carboxylation of biotin on its carrier protein (BCCP) and then the CO(2) group is transferred by the carboxyltransferase to acetyl-CoA to form malonyl-CoA. In Legionella pneumophila (strain Paris), this protein is Acetyl-coenzyme A carboxylase carboxyl transferase subunit alpha.